We begin with the raw amino-acid sequence, 806 residues long: Phosphatidylinositol 4-kinase beta (806 aa).

The region spanning 55-247 (LDKVKLIRGS…GTKLRKLILS (193 aa)) is the PIK helical domain. 2 disordered regions span residues 69-104 (LDKI…SASR) and 253-310 (AHKK…DEPV). Residues 283–302 (DATVSISLSSNLKRTSSNPK) show a composition bias toward polar residues. One can recognise a PI3K/PI4K catalytic domain in the interval 525–791 (EPWQEKVRRI…MVDGSMRSIT (267 aa)). Residues 531-537 (VRRIREG) form a G-loop region. Residues 658–666 (QVKDRHNGN) form a catalytic loop region. An activation loop region spans residues 677-701 (HIDFGFILSSSPRNLGFETSAFKLT).

This sequence belongs to the PI3/PI4-kinase family. Type III PI4K subfamily. It depends on Mg(2+) as a cofactor. The cofactor is Mn(2+).

Its subcellular location is the endomembrane system. The protein localises to the mitochondrion outer membrane. It is found in the rough endoplasmic reticulum membrane. It carries out the reaction a 1,2-diacyl-sn-glycero-3-phospho-(1D-myo-inositol) + ATP = a 1,2-diacyl-sn-glycero-3-phospho-(1D-myo-inositol 4-phosphate) + ADP + H(+). Phosphorylates phosphatidylinositol (PI) in the first committed step in the production of the second messenger inositol-1,4,5,-trisphosphate (PIP). May play an important role in the inner ear development. The polypeptide is Phosphatidylinositol 4-kinase beta (pi4kb) (Xenopus tropicalis (Western clawed frog)).